Consider the following 375-residue polypeptide: tRNA-specific 2-thiouridylase MnmA (375 aa).

ATP contacts are provided by residues 16-23 and M42; that span reads GMSGGVDS. The interval 102–104 is interaction with target base in tRNA; sequence NPD. Residue C107 is the Nucleophile of the active site. An intrachain disulfide couples C107 to C203. Residue G131 coordinates ATP. Residues 153-155 are interaction with tRNA; the sequence is KDQ. Residue C203 is the Cysteine persulfide intermediate of the active site. Positions 315 to 316 are interaction with tRNA; that stretch reads RY.

It belongs to the MnmA/TRMU family.

Its subcellular location is the cytoplasm. It carries out the reaction S-sulfanyl-L-cysteinyl-[protein] + uridine(34) in tRNA + AH2 + ATP = 2-thiouridine(34) in tRNA + L-cysteinyl-[protein] + A + AMP + diphosphate + H(+). Its function is as follows. Catalyzes the 2-thiolation of uridine at the wobble position (U34) of tRNA, leading to the formation of s(2)U34. This Pseudomonas aeruginosa (strain LESB58) protein is tRNA-specific 2-thiouridylase MnmA.